Reading from the N-terminus, the 240-residue chain is Adapter protein MecA (240 aa).

The interval 118 to 138 (EQRAQQQKHSHKSEQKQTKQR) is disordered.

The protein belongs to the MecA family. Homodimer.

Its function is as follows. Enables the recognition and targeting of unfolded and aggregated proteins to the ClpC protease or to other proteins involved in proteolysis. The sequence is that of Adapter protein MecA from Staphylococcus haemolyticus (strain JCSC1435).